The sequence spans 415 residues: MTVDLNKMGQAAREASRQLALLGEQKKNQVLETVAQELLAKADEIIAANKVDLENATNMPEKFIDRLKIDNDRIAAMAEGVRQVAQLADPIGKIDAGWVNYAGLQIEKKRVPLGVVGMIFEARPNVTVDASALCFKSGNAVILRGGKEALQTNIKITKVIRQALEQEGINPDAVQVITETSHELANEFMQLTDYLDVLIPRGSARLIQTVLNTAKVPVIETGAGICHVYVDKFADKKMAVEITTNAKVQRPSVCNAIENLVIHQDVAQEYLPAIADELQKYNVELRGDEKVCEILGDKATLATAEDWDTEYNDYIIAIKIVSSIDEAIDFINEHNTKHSEAIITENYTRSQKFLDEIDAACVYVNASTRFTDGFEFGFGAEIGISTQKLHARGPMGLEALTSTKYVIRGNGQIRK.

This sequence belongs to the gamma-glutamyl phosphate reductase family.

It localises to the cytoplasm. It catalyses the reaction L-glutamate 5-semialdehyde + phosphate + NADP(+) = L-glutamyl 5-phosphate + NADPH + H(+). Its pathway is amino-acid biosynthesis; L-proline biosynthesis; L-glutamate 5-semialdehyde from L-glutamate: step 2/2. Its function is as follows. Catalyzes the NADPH-dependent reduction of L-glutamate 5-phosphate into L-glutamate 5-semialdehyde and phosphate. The product spontaneously undergoes cyclization to form 1-pyrroline-5-carboxylate. The polypeptide is Gamma-glutamyl phosphate reductase (Ligilactobacillus salivarius (strain UCC118) (Lactobacillus salivarius)).